The chain runs to 208 residues: FMN-dependent NADH:quinone oxidoreductase 1 (208 aa).

The protein belongs to the azoreductase type 1 family. As to quaternary structure, homodimer. FMN serves as cofactor.

It carries out the reaction 2 a quinone + NADH + H(+) = 2 a 1,4-benzosemiquinone + NAD(+). The catalysed reaction is N,N-dimethyl-1,4-phenylenediamine + anthranilate + 2 NAD(+) = 2-(4-dimethylaminophenyl)diazenylbenzoate + 2 NADH + 2 H(+). In terms of biological role, quinone reductase that provides resistance to thiol-specific stress caused by electrophilic quinones. Also exhibits azoreductase activity. Catalyzes the reductive cleavage of the azo bond in aromatic azo compounds to the corresponding amines. In Bacillus licheniformis (strain ATCC 14580 / DSM 13 / JCM 2505 / CCUG 7422 / NBRC 12200 / NCIMB 9375 / NCTC 10341 / NRRL NRS-1264 / Gibson 46), this protein is FMN-dependent NADH:quinone oxidoreductase 1.